Consider the following 175-residue polypeptide: Capsid protein (175 aa).

The segment at 1–35 (MFRQEMARYPKKSIKKRRVGRRKYGSKAATSHDYS) is disordered. Residues 9 to 25 (YPKKSIKKRRVGRRKYG) show a composition bias toward basic residues.

Belongs to the nanoviridae capsid protein family.

It is found in the virion. This is Capsid protein (DNA-S) from Musa (BBTV).